We begin with the raw amino-acid sequence, 540 residues long: Glucose-6-phosphate isomerase (540 aa).

Catalysis depends on Glu350, which acts as the Proton donor. Active-site residues include His381 and Lys503.

The protein belongs to the GPI family.

It localises to the cytoplasm. It catalyses the reaction alpha-D-glucose 6-phosphate = beta-D-fructose 6-phosphate. Its pathway is carbohydrate biosynthesis; gluconeogenesis. The protein operates within carbohydrate degradation; glycolysis; D-glyceraldehyde 3-phosphate and glycerone phosphate from D-glucose: step 2/4. In terms of biological role, catalyzes the reversible isomerization of glucose-6-phosphate to fructose-6-phosphate. The polypeptide is Glucose-6-phosphate isomerase (Paraburkholderia phymatum (strain DSM 17167 / CIP 108236 / LMG 21445 / STM815) (Burkholderia phymatum)).